The following is a 335-amino-acid chain: DNA-directed RNA polymerase subunit alpha (335 aa).

The interval 1–231 is alpha N-terminal domain (alpha-NTD); that stretch reads MVREKITVST…DLLIPFLHTK (231 aa). The alpha C-terminal domain (alpha-CTD) stretch occupies residues 263-335; it reads KKMALKSIFI…FVIDLPKNKF (73 aa).

This sequence belongs to the RNA polymerase alpha chain family. In plastids the minimal PEP RNA polymerase catalytic core is composed of four subunits: alpha, beta, beta', and beta''. When a (nuclear-encoded) sigma factor is associated with the core the holoenzyme is formed, which can initiate transcription.

It is found in the plastid. The protein resides in the chloroplast. It carries out the reaction RNA(n) + a ribonucleoside 5'-triphosphate = RNA(n+1) + diphosphate. Functionally, DNA-dependent RNA polymerase catalyzes the transcription of DNA into RNA using the four ribonucleoside triphosphates as substrates. The protein is DNA-directed RNA polymerase subunit alpha of Lactuca sativa (Garden lettuce).